A 179-amino-acid chain; its full sequence is Large ribosomal subunit protein uL5 (179 aa).

The protein belongs to the universal ribosomal protein uL5 family. In terms of assembly, part of the 50S ribosomal subunit; part of the 5S rRNA/L5/L18/L25 subcomplex. Contacts the 5S rRNA and the P site tRNA. Forms a bridge to the 30S subunit in the 70S ribosome.

This is one of the proteins that bind and probably mediate the attachment of the 5S RNA into the large ribosomal subunit, where it forms part of the central protuberance. In the 70S ribosome it contacts protein S13 of the 30S subunit (bridge B1b), connecting the 2 subunits; this bridge is implicated in subunit movement. Contacts the P site tRNA; the 5S rRNA and some of its associated proteins might help stabilize positioning of ribosome-bound tRNAs. The protein is Large ribosomal subunit protein uL5 of Edwardsiella ictaluri (strain 93-146).